Consider the following 176-residue polypeptide: Small capsomere-interacting protein (176 aa).

2 disordered regions span residues 75–109 and 148–176; these read DKRQRASVAGAGAHAHLGGSSATPVQQAQAAASAG and ASAAAAVDTGSGGGGQPHDTAPRGARKKQ. A compositionally biased stretch (low complexity) spans 80–109; that stretch reads ASVAGAGAHAHLGGSSATPVQQAQAAASAG.

It belongs to the herpesviridae small capsomere-interacting protein family. Interacts with the major capsid protein/MCP.

It localises to the virion. The protein localises to the host nucleus. In terms of biological role, participates in the assembly of the infectious particles by decorating the outer surface of the capsid shell and thus forming a layer between the capsid and the tegument. Complexes composed of the major capsid protein and small capsomere-interacting protein/SCP assemble together in the host cytoplasm and are translocated to the nucleus, where they accumulate and participate in capsid assembly. The chain is Small capsomere-interacting protein from Epstein-Barr virus (strain B95-8) (HHV-4).